The chain runs to 299 residues: Peroxisomal biogenesis factor 19 (299 aa).

Residues 1–61 are disordered; that stretch reads MAAAEEGCGV…KRAPGDTAKD (61 aa). A2 bears the N-acetylalanine mark. The docking to the peroxisome membrane and binding to PEX3 stretch occupies residues 2–56; it reads AAAEEGCGVGVEDDRELEELLESALDDFDKAKPSPEHAPTISAPDASGPQKRAPG. Residues 2–91 are necessary for PEX19 function on peroxisome biogenesis; it reads AAAEEGCGVG…QATAEFEKAM (90 aa). The segment covering 12–27 has biased composition (acidic residues); it reads VEDDRELEELLESALD. Phosphoserine is present on residues S35 and S66. At T236 the chain carries Phosphothreonine. C296 carries the cysteine methyl ester modification. C296 carries the S-farnesyl cysteine lipid modification. Residues 297–299 constitute a propeptide, removed in mature form; the sequence is LIM.

This sequence belongs to the peroxin-19 family. As to quaternary structure, interacts with a broad range of peroxisomal membrane proteins, including PEX3, PEX10, PEX11A, PEX11B, PEX12, PEX13, PEX14 and PEX16, PXMP2/PMP22, PXMP4/PMP24, SLC25A17/PMP34, ABCD1/ALDP, ABCD2/ALDRP, and ABCD3/PMP70. Also interacts with the tumor suppressor CDKN2A/p19ARF.

It localises to the cytoplasm. Its subcellular location is the peroxisome membrane. Functionally, necessary for early peroxisomal biogenesis. Acts both as a cytosolic chaperone and as an import receptor for peroxisomal membrane proteins (PMPs). Binds and stabilizes newly synthesized PMPs in the cytoplasm by interacting with their hydrophobic membrane-spanning domains, and targets them to the peroxisome membrane by binding to the integral membrane protein PEX3. Excludes CDKN2A from the nucleus and prevents its interaction with MDM2, which results in active degradation of TP53. This Mus musculus (Mouse) protein is Peroxisomal biogenesis factor 19 (Pex19).